The following is a 304-amino-acid chain: Phosphatidylinositol mannoside acyltransferase (304 aa).

Catalysis depends on His-126, which acts as the Proton acceptor. Positions 126 and 164 each coordinate hexadecanoyl-CoA. The active site involves Glu-200. 2 residues coordinate hexadecanoyl-CoA: Ser-206 and Glu-229.

Belongs to the LpxL/LpxM/LpxP family. As to quaternary structure, monomer.

Its subcellular location is the cell inner membrane. The catalysed reaction is a 2,6-O-bis(alpha-D-mannopyranosyl)-1-phosphatidyl-1D-myo-inositol + an acyl-CoA = a 2-O-(alpha-D-mannosyl)-6-O-(6-O-acyl-alpha-D-mannosyl)-1-phosphatidyl-1D-myo-inositol + CoA. The enzyme catalyses a 1,2-diacyl-sn-glycero-3-phospho-[alpha-D-mannopyranosyl-(1&lt;-&gt;6)-D-myo-inositol] + an acyl-CoA = a 1,2-diacyl-sn-glycero-3-phospho-[alpha-D-6-acyl-mannopyranosyl-(1&lt;-&gt;6)-D-myo-inositol] + CoA. It functions in the pathway phospholipid metabolism; phosphatidylinositol metabolism. In terms of biological role, catalyzes the transfer of a palmitoyl moiety from palmitoyl-CoA to the 6-position of the mannose ring linked to the 2-position of myo-inositol in phosphatidyl-myo-inositol monomannoside (PIM1) or dimannoside (PIM2). This is Phosphatidylinositol mannoside acyltransferase from Mycolicibacterium smegmatis (strain ATCC 700084 / mc(2)155) (Mycobacterium smegmatis).